The chain runs to 118 residues: Large ribosomal subunit protein bL19 (118 aa).

Belongs to the bacterial ribosomal protein bL19 family.

Its function is as follows. This protein is located at the 30S-50S ribosomal subunit interface and may play a role in the structure and function of the aminoacyl-tRNA binding site. In Campylobacter fetus subsp. fetus (strain 82-40), this protein is Large ribosomal subunit protein bL19.